Reading from the N-terminus, the 274-residue chain is Large ribosomal subunit protein uL2 (274 aa).

2 disordered regions span residues 28-54 (KPFA…TRHI) and 221-274 (RGTA…RSKK). Over residues 39 to 49 (KTGGRNNNGRI) the composition is skewed to polar residues.

The protein belongs to the universal ribosomal protein uL2 family. In terms of assembly, part of the 50S ribosomal subunit. Forms a bridge to the 30S subunit in the 70S ribosome.

In terms of biological role, one of the primary rRNA binding proteins. Required for association of the 30S and 50S subunits to form the 70S ribosome, for tRNA binding and peptide bond formation. It has been suggested to have peptidyltransferase activity; this is somewhat controversial. Makes several contacts with the 16S rRNA in the 70S ribosome. The chain is Large ribosomal subunit protein uL2 from Edwardsiella ictaluri (strain 93-146).